Consider the following 716-residue polypeptide: Putative proline--tRNA ligase C19C7.06 (716 aa).

Positions 655–675 (KNSARQVNGDEPEDEKAPSMG) are disordered.

It belongs to the class-II aminoacyl-tRNA synthetase family.

Its subcellular location is the cytoplasm. It catalyses the reaction tRNA(Pro) + L-proline + ATP = L-prolyl-tRNA(Pro) + AMP + diphosphate. The sequence is that of Putative proline--tRNA ligase C19C7.06 (prs1) from Schizosaccharomyces pombe (strain 972 / ATCC 24843) (Fission yeast).